A 529-amino-acid polypeptide reads, in one-letter code: Bifunctional purine biosynthesis protein PurH (529 aa).

One can recognise an MGS-like domain in the interval methionine 1–valine 148.

It belongs to the PurH family.

It catalyses the reaction (6R)-10-formyltetrahydrofolate + 5-amino-1-(5-phospho-beta-D-ribosyl)imidazole-4-carboxamide = 5-formamido-1-(5-phospho-D-ribosyl)imidazole-4-carboxamide + (6S)-5,6,7,8-tetrahydrofolate. The catalysed reaction is IMP + H2O = 5-formamido-1-(5-phospho-D-ribosyl)imidazole-4-carboxamide. It participates in purine metabolism; IMP biosynthesis via de novo pathway; 5-formamido-1-(5-phospho-D-ribosyl)imidazole-4-carboxamide from 5-amino-1-(5-phospho-D-ribosyl)imidazole-4-carboxamide (10-formyl THF route): step 1/1. It functions in the pathway purine metabolism; IMP biosynthesis via de novo pathway; IMP from 5-formamido-1-(5-phospho-D-ribosyl)imidazole-4-carboxamide: step 1/1. The polypeptide is Bifunctional purine biosynthesis protein PurH (Cronobacter sakazakii (strain ATCC BAA-894) (Enterobacter sakazakii)).